Reading from the N-terminus, the 411-residue chain is Putative binding protein BRA0748/BS1330_II0741 (411 aa).

The N-terminal stretch at 1–25 (MLIRKWKAGLLAGLSILALASSADA) is a signal peptide.

Belongs to the bacterial solute-binding protein 1 family. In terms of assembly, the complex is composed of two ATP-binding proteins (BRA0745), two transmembrane proteins (BRA0749) and a solute-binding protein (BRA0748).

It localises to the periplasm. Functionally, probably part of an ABC transporter complex. This Brucella suis biovar 1 (strain 1330) protein is Putative binding protein BRA0748/BS1330_II0741.